We begin with the raw amino-acid sequence, 435 residues long: uncharacterized protein (435 aa).

S47 carries the phosphoserine modification. Disordered regions lie at residues 174–210 (LKKK…DDED) and 290–372 (KAEA…EDNK). The span at 195–210 (NEEDEEDEEDEEDDED) shows a compositional bias: acidic residues. Residues 290–304 (KAEATGEAHSKDVSA) are compositionally biased toward basic and acidic residues. Over residues 308–318 (SANTTTSFDET) the composition is skewed to polar residues. Basic and acidic residues-rich tracts occupy residues 322–340 (EDEK…KEAN) and 347–361 (VADR…KVND).

The protein localises to the cytoplasm. This is an uncharacterized protein from Saccharomyces cerevisiae (strain ATCC 204508 / S288c) (Baker's yeast).